The primary structure comprises 301 residues: Dihydroorotate dehydrogenase B (NAD(+)), catalytic subunit (301 aa).

FMN contacts are provided by residues serine 21 and 45 to 46 (KS). Substrate is bound by residues lysine 45, 69–73 (NAVGL), and asparagine 125. Residue asparagine 125 participates in FMN binding. Cysteine 128 serves as the catalytic Nucleophile. FMN is bound by residues lysine 163 and isoleucine 187. 188–189 (NT) is a substrate binding site. Residues glycine 213, 239 to 240 (GG), and 261 to 262 (GT) each bind FMN.

Belongs to the dihydroorotate dehydrogenase family. Type 1 subfamily. Heterotetramer of 2 PyrK and 2 PyrD type B subunits. It depends on FMN as a cofactor.

Its subcellular location is the cytoplasm. The enzyme catalyses (S)-dihydroorotate + NAD(+) = orotate + NADH + H(+). The protein operates within pyrimidine metabolism; UMP biosynthesis via de novo pathway; orotate from (S)-dihydroorotate (NAD(+) route): step 1/1. Its function is as follows. Catalyzes the conversion of dihydroorotate to orotate with NAD(+) as electron acceptor. The sequence is that of Dihydroorotate dehydrogenase B (NAD(+)), catalytic subunit (pyrD) from Thermoplasma volcanium (strain ATCC 51530 / DSM 4299 / JCM 9571 / NBRC 15438 / GSS1).